The chain runs to 418 residues: MLEHLRATDPIIADLIEREAQRQRQGLELIASENYTSLAVMEAQGSVLTNKYAEGLPGRRYYGGCEFVDAIEQLAIDRACQLFGTSHANVQPHSGAQANIAVFTALLQPGDTILGMRLDHGGHLTHGSPVNFSGKWYNVHFYGVDPQTGQIDYDDLAAKARAIRPKLITSGASAYPRLIDFARMRQIADEVGALLMADIAHIAGLVATGEHPSPVGHAHIITTTTHKTLRGPRGGLILMGEEFAKQINSSVFPGTQGGPLMHVIAGKAVAFGEALRPEFKQYAAQIRRNAKALAEGLHAQGLTLVSGGTDNHLMLVDLRSTGLTGAQAQRALDKAAITVNKNAIPDDPQPPMKTSGIRIGTPAVTTRGMREREMAQIAAWIGEVLMYPDDEVRLARIAAEVAEMCRHFPVPADMVQVR.

Residues Leu-118 and 122–124 contribute to the (6S)-5,6,7,8-tetrahydrofolate site; that span reads GHL. Lys-227 bears the N6-(pyridoxal phosphate)lysine mark. A (6S)-5,6,7,8-tetrahydrofolate-binding site is contributed by Glu-242.

This sequence belongs to the SHMT family. Homodimer. Requires pyridoxal 5'-phosphate as cofactor.

It is found in the cytoplasm. It catalyses the reaction (6R)-5,10-methylene-5,6,7,8-tetrahydrofolate + glycine + H2O = (6S)-5,6,7,8-tetrahydrofolate + L-serine. The protein operates within one-carbon metabolism; tetrahydrofolate interconversion. It functions in the pathway amino-acid biosynthesis; glycine biosynthesis; glycine from L-serine: step 1/1. Functionally, catalyzes the reversible interconversion of serine and glycine with tetrahydrofolate (THF) serving as the one-carbon carrier. This reaction serves as the major source of one-carbon groups required for the biosynthesis of purines, thymidylate, methionine, and other important biomolecules. Also exhibits THF-independent aldolase activity toward beta-hydroxyamino acids, producing glycine and aldehydes, via a retro-aldol mechanism. The polypeptide is Serine hydroxymethyltransferase (Chloroflexus aggregans (strain MD-66 / DSM 9485)).